A 239-amino-acid polypeptide reads, in one-letter code: Ribonuclease PH (239 aa).

Residues Arg87 and 125–127 each bind phosphate; that span reads GTR.

The protein belongs to the RNase PH family. As to quaternary structure, homohexameric ring arranged as a trimer of dimers.

The catalysed reaction is tRNA(n+1) + phosphate = tRNA(n) + a ribonucleoside 5'-diphosphate. In terms of biological role, phosphorolytic 3'-5' exoribonuclease that plays an important role in tRNA 3'-end maturation. Removes nucleotide residues following the 3'-CCA terminus of tRNAs; can also add nucleotides to the ends of RNA molecules by using nucleoside diphosphates as substrates, but this may not be physiologically important. Probably plays a role in initiation of 16S rRNA degradation (leading to ribosome degradation) during starvation. The sequence is that of Ribonuclease PH from Saccharophagus degradans (strain 2-40 / ATCC 43961 / DSM 17024).